The following is a 624-amino-acid chain: Kelch-like ECH-associated protein 1 (624 aa).

A disordered region spans residues 1 to 27; it reads MQPEPRPSGAGAHTQFLPLRSQRPEGA. Position 38 is an S-(2-succinyl)cysteine (C38). The BTB domain occupies 77 to 149; it reads CDVTLQVKYE…AYTASISMGE (73 aa). R135 participates in a covalent cross-link: N5-[4-(S-L-cysteinyl)-5-methyl-1H-imidazol-2-yl]-L-ornithine (Arg-Cys) (interchain with C-151 in KEAP1). S-(2-succinyl)cysteine occurs at positions 151 and 241. An S-(2,3-dicarboxypropyl)cysteine; alternate modification is found at C151. Residue C151 is modified to S-nitrosocysteine; alternate. Residue C151 forms an N5-[4-(S-L-cysteinyl)-5-methyl-1H-imidazol-2-yl]-L-ornithine (Cys-Arg) (interchain with R-135 in KEAP1) linkage. Residues 184-286 form the BACK domain; sequence AIGIANFAEQ…TPHFLQMQLQ (103 aa). 2 positions are modified to S-(2,3-dicarboxypropyl)cysteine: C257 and C273. An S-(2-succinyl)cysteine mark is found at C288 and C319. The residue at position 288 (C288) is an S-(2,3-dicarboxypropyl)cysteine; alternate. Kelch repeat units lie at residues 327-372, 373-423, 424-470, 471-517, 519-564, and 565-611; these read LIYT…VVGG, LLYA…VIDG, HIYA…VLNR, LLYA…VLHN, IYAA…VHQG, and RIYV…VTME. S-cGMP-cysteine is present on C434. C613 carries the S-(2-succinyl)cysteine modification.

This sequence belongs to the KEAP1 family. Component of the BCR(KEAP1) E3 ubiquitin ligase complex, at least composed of 2 molecules of CUL3, 2 molecules of KEAP1, and RBX1. Interacts with NFE2L2/NRF2; the interaction is direct. Forms a ternary complex with NFE2L2/NRF2 and PGAM5. Interacts with (phosphorylated) SQSTM1/p62; the interaction is direct and inactivates the BCR(KEAP1) complex by sequestering it in inclusion bodies, promoting its degradation. Interacts with NFE2L1. Interacts with BPTF and PTMA. Interacts with MAP1LC3B. Interacts indirectly with ENC1. Interacts with SESN1 and SESN2. Interacts with HSP90AA1 and HSP90AB1. Interacts with PGCKA1; this interaction prevents the ubiquitination of KEAP1 by TRIM25, thus protecting KEAP1 protein from degradation. Non-enzymatic covalent modifications of reactive cysteines by electrophile metabolites inactivate the BCR(KEAP1) complex. Accumulation of fumarate promotes the formation of cysteine S-succination (S-(2-succinyl)cysteine), leading to inactivate the BCR(KEAP1) complex and promote NFE2L2/NRF2 nuclear accumulation and activation. Nitric oxide-dependent 8-Nitro-cGMP formation promotes cysteine guanylation (S-cGMP-cysteine), leading to NFE2L2/NRF2 nuclear accumulation and activation. Itaconate, an anti-inflammatory metabolite generated in response to lipopolysaccharide, alkylates cysteines, activating NFE2L2/NRF2. Methylglyoxal, a reactive metabolite that accumulates when the glycolytic enzyme PGK1 is inhibited, promotes formation of a methylimidazole cross-link between proximal Cys-151 and Arg-135 on another KEAP1 molecule, resulting in an inactive dimer that inactivates the BCR(KEAP1) complex. Post-translationally, degraded via a proteasomal-independent process during selective autophagy: interaction with phosphorylated SQSTM1/p62 sequesters KEAP1 in inclusion bodies, leading to its degradation. In terms of processing, auto-ubiquitinated by the BCR(KEAP1) complex. Quinone-induced oxidative stress, but not sulforaphane, increases its ubiquitination. Ubiquitination and subsequent degradation is most pronounced following prolonged exposure of cells to oxidative stress, particularly in glutathione-deficient cells that are highly susceptible to oxidative stress. Deubiquitinated by USP25; leading to stabilization. Ubiquitinated by TRIM25; leading to degradation upon ER stress.

It is found in the cytoplasm. The protein resides in the nucleus. It functions in the pathway protein modification; protein ubiquitination. Its activity is regulated as follows. Ubiquitin ligase activity of the BCR(KEAP1) complex is inhibited by oxidative stress and electrophile metabolites such as sulforaphane. Electrophile metabolites react with reactive cysteine residues in KEAP1 and trigger non-enzymatic covalent modifications of these cysteine residues, leading to inactivate the ubiquitin ligase activity of the BCR(KEAP1) complex. Selective autophagy also inactivates the BCR(KEAP1) complex via interaction between KEAP1 and SQSTM1/p62, which sequesters the complex in inclusion bodies and promotes its degradation. Its function is as follows. Substrate-specific adapter of a BCR (BTB-CUL3-RBX1) E3 ubiquitin ligase complex that regulates the response to oxidative stress by targeting NFE2L2/NRF2 for ubiquitination. KEAP1 acts as a key sensor of oxidative and electrophilic stress: in normal conditions, the BCR(KEAP1) complex mediates ubiquitination and degradation of NFE2L2/NRF2, a transcription factor regulating expression of many cytoprotective genes. In response to oxidative stress, different electrophile metabolites trigger non-enzymatic covalent modifications of highly reactive cysteine residues in KEAP1, leading to inactivate the ubiquitin ligase activity of the BCR(KEAP1) complex, promoting NFE2L2/NRF2 nuclear accumulation and expression of phase II detoxifying enzymes. In response to selective autophagy, KEAP1 is sequestered in inclusion bodies following its interaction with SQSTM1/p62, leading to inactivation of the BCR(KEAP1) complex and activation of NFE2L2/NRF2. The BCR(KEAP1) complex also mediates ubiquitination of SQSTM1/p62, increasing SQSTM1/p62 sequestering activity and degradation. The BCR(KEAP1) complex also targets BPTF and PGAM5 for ubiquitination and degradation by the proteasome. This Sus scrofa (Pig) protein is Kelch-like ECH-associated protein 1.